Here is a 378-residue protein sequence, read N- to C-terminus: Succinate--CoA ligase [GDP-forming] subunit beta (378 aa).

Residues 9–235 (KEILARYGVP…VEAEHPLEVE (227 aa)) enclose the ATP-grasp domain. Residues Lys45, 52–54 (GRG), Val94, and Glu99 each bind GTP. Residues Asn190 and Asp204 each contribute to the Mg(2+) site. Substrate contacts are provided by residues Asn255 and 312 to 314 (GIT).

This sequence belongs to the succinate/malate CoA ligase beta subunit family. As to quaternary structure, heterotetramer of two alpha and two beta subunits. It depends on Mg(2+) as a cofactor.

It carries out the reaction GTP + succinate + CoA = succinyl-CoA + GDP + phosphate. It catalyses the reaction succinate + ATP + CoA = succinyl-CoA + ADP + phosphate. It functions in the pathway carbohydrate metabolism; tricarboxylic acid cycle; succinate from succinyl-CoA (ligase route): step 1/1. Its function is as follows. Succinyl-CoA synthetase functions in the citric acid cycle (TCA), coupling the hydrolysis of succinyl-CoA to the synthesis of either ATP or GTP and thus represents the only step of substrate-level phosphorylation in the TCA. The beta subunit provides nucleotide specificity of the enzyme and binds the substrate succinate, while the binding sites for coenzyme A and phosphate are found in the alpha subunit. Can use either ATP or GTP, but prefers GTP. In Thermus thermophilus, this protein is Succinate--CoA ligase [GDP-forming] subunit beta.